The sequence spans 96 residues: Teretoxin Tgu6.1 (96 aa).

The N-terminal stretch at 1–16 is a signal peptide; sequence MRPFLVFVLIVSVSLA. A propeptide spanning residues 17-52 is cleaved from the precursor; the sequence is FSFEDMPNKGGDSVASITADQARGHKRNPLFPFAQR.

In terms of processing, contains 3 disulfide bonds. Expressed by the venom duct.

It localises to the secreted. In terms of biological role, the recombinant protein causes paralysis to polychaete worms (Nereis virens), the natural prey of terebrid snails. In Terebra guttata (White spotted auger snail), this protein is Teretoxin Tgu6.1.